The primary structure comprises 520 residues: Intermediate filament protein ON3 (520 aa).

A compositionally biased stretch (low complexity) spans 1–27 (MSYTKKTSYSVKSSSSGSVPRSFSSMS). The disordered stretch occupies residues 1 to 33 (MSYTKKTSYSVKSSSSGSVPRSFSSMSYSGPSV). Residues 1-108 (MSYTKKTSYS…DPNIQVVRTQ (108 aa)) form a head region. The interval 109–144 (EKEQMKSLNNRFASFIDKVRFLEQQNKMLETKWSLL) is coil 1A. In terms of domain architecture, IF rod spans 109-420 (EKEQMKSLNN…KLLEGEEDRL (312 aa)). The segment at 145-157 (QNQTATRSNIDAM) is linker 1. The tract at residues 158–253 (FEAYINNLRR…QIFEEEIREL (96 aa)) is coil 1B. The interval 254 to 273 (QSQIKDTSVVVEMDNSRNLD) is linker 12. Residues 274 to 420 (MDAIVAEVRA…KLLEGEEDRL (147 aa)) are coil 2. Residues 421–520 (LSGIKSVNIS…VSESSEVVQD (100 aa)) form a tail region.

This sequence belongs to the intermediate filament family.

Functionally, one of the non-neuronal predominant intermediate filament proteins of the visual pathway. In Carassius auratus (Goldfish), this protein is Intermediate filament protein ON3.